Here is a 377-residue protein sequence, read N- to C-terminus: Anhydro-N-acetylmuramic acid kinase (377 aa).

14–21 (GTSLDGVD) lines the ATP pocket.

This sequence belongs to the anhydro-N-acetylmuramic acid kinase family.

The enzyme catalyses 1,6-anhydro-N-acetyl-beta-muramate + ATP + H2O = N-acetyl-D-muramate 6-phosphate + ADP + H(+). The protein operates within amino-sugar metabolism; 1,6-anhydro-N-acetylmuramate degradation. Its pathway is cell wall biogenesis; peptidoglycan recycling. Functionally, catalyzes the specific phosphorylation of 1,6-anhydro-N-acetylmuramic acid (anhMurNAc) with the simultaneous cleavage of the 1,6-anhydro ring, generating MurNAc-6-P. Is required for the utilization of anhMurNAc either imported from the medium or derived from its own cell wall murein, and thus plays a role in cell wall recycling. The sequence is that of Anhydro-N-acetylmuramic acid kinase from Pasteurella multocida (strain Pm70).